The primary structure comprises 694 residues: Polyphosphate kinase (694 aa).

Asn-45 serves as a coordination point for ATP. 2 residues coordinate Mg(2+): Arg-367 and Arg-397. The Phosphohistidine intermediate role is filled by His-427. Residues Tyr-460, Arg-553, and His-580 each coordinate ATP.

The protein belongs to the polyphosphate kinase 1 (PPK1) family. Mg(2+) serves as cofactor. Post-translationally, an intermediate of this reaction is the autophosphorylated ppk in which a phosphate is covalently linked to a histidine residue through a N-P bond.

The catalysed reaction is [phosphate](n) + ATP = [phosphate](n+1) + ADP. Catalyzes the reversible transfer of the terminal phosphate of ATP to form a long-chain polyphosphate (polyP). The chain is Polyphosphate kinase from Campylobacter jejuni (strain RM1221).